The primary structure comprises 418 residues: Voltage-gated ClC-type chloride channel ClcB (418 aa).

Transmembrane regions (helical) follow at residues L5–A25, L54–F74, L146–G166, L168–I188, A222–M242, W258–W278, A291–A311, G316–Y336, L352–M372, and M380–I400.

This sequence belongs to the chloride channel (TC 2.A.49) family. ClcB subfamily.

It is found in the cell inner membrane. Probably acts as an electrical shunt for an outwardly-directed proton pump that is linked to amino acid decarboxylation, as part of the extreme acid resistance (XAR) response. In Escherichia coli (strain SMS-3-5 / SECEC), this protein is Voltage-gated ClC-type chloride channel ClcB.